A 255-amino-acid polypeptide reads, in one-letter code: Myogenic factor 5 (255 aa).

The bHLH domain occupies 83–134; it reads DRRKAATMRERRRLKKVNQAFDTLKRCTTTNPNQRLPKVEILRNAIRYIESL. The disordered stretch occupies residues 217 to 249; sequence SEQPGLPLQDPASLSPVASTDSQPATPGASSSR. Positions 232-249 are enriched in polar residues; the sequence is PVASTDSQPATPGASSSR.

As to quaternary structure, efficient DNA binding requires dimerization with another bHLH protein.

It localises to the nucleus. In terms of biological role, acts as a transcriptional activator that promotes transcription of muscle-specific target genes and plays a role in muscle differentiation. Together with MYOG and MYOD1, co-occupies muscle-specific gene promoter core region during myogenesis. Induces fibroblasts to differentiate into myoblasts. Probable sequence specific DNA-binding protein. In Bos taurus (Bovine), this protein is Myogenic factor 5 (MYF5).